Reading from the N-terminus, the 365-residue chain is HLA class I histocompatibility antigen, A alpha chain (365 aa).

Residues 1–24 form the signal peptide; that stretch reads MAVMAPRTLLLLLSGALALTQTWA. The tract at residues 3 to 11 is VL9 epitope; the sequence is VMAPRTLLL. Residues 25–114 form an alpha-1 region; sequence GSHSMRYFFT…LRGYYNQSEA (90 aa). Topologically, residues 25–308 are extracellular; the sequence is GSHSMRYFFT…ELSSQPTIPI (284 aa). Tyr-31 is a binding site for a peptide antigen. Tyr-83 carries the post-translational modification Sulfotyrosine. The a peptide antigen site is built by Thr-97 and Tyr-108. N-linked (GlcNAc...) asparagine glycosylation occurs at Asn-110. Residues 115–206 form an alpha-2 region; it reads GSHTIQIMYG…ENGKETLQRT (92 aa). The cysteines at positions 125 and 188 are disulfide-linked. A peptide antigen-binding residues include Asp-140, Thr-167, Lys-170, Tyr-183, and Tyr-195. The segment at 207–298 is alpha-3; it reads DPPKTHMTHH…GLPKPLTLRW (92 aa). In terms of domain architecture, Ig-like C1-type spans 209 to 295; sequence PKTHMTHHPI…QHEGLPKPLT (87 aa). Cys-227 and Cys-283 form a disulfide bridge. Residues 299–308 are connecting peptide; it reads ELSSQPTIPI. A helical transmembrane segment spans residues 309–332; sequence VGIIAGLVLLGAVITGAVVAAVMW. At 333–365 the chain is on the cytoplasmic side; sequence RRKSSDRKGGSYTQAASSDSAQGSDVSLTACKV. The disordered stretch occupies residues 339-365; the sequence is RKGGSYTQAASSDSAQGSDVSLTACKV. Ser-343 carries the phosphoserine modification. A Phosphotyrosine modification is found at Tyr-344. Residues 346–359 are compositionally biased toward low complexity; that stretch reads QAASSDSAQGSDVS. A phosphoserine mark is found at Ser-349, Ser-350, Ser-352, Ser-356, and Ser-359.

Belongs to the MHC class I family. As to quaternary structure, heterotrimer that consists of an alpha chain HLA-A, a beta chain B2M and a peptide (peptide-HLA-A-B2M). Early in biogenesis, HLA-A-B2M dimer interacts with the components of the peptide-loading complex composed of TAPBP, TAP1-TAP2, TAPBPL, PDIA3/ERP57 and CALR. Interacts with TAP1-TAP2 transporter via TAPBP; this interaction is obligatory for the loading of peptide epitopes delivered to the ER by TAP1-TAP2 transporter. Interacts with TAPBPL; TAPBPL binds peptide-free HLA-A-B2M complexes or those loaded with low affinity peptides, likely facilitating peptide exchange for higher affinity peptides. Only optimally assembled peptide-HLA-B2M trimer translocates to the surface of antigen-presenting cells, where it interacts with TCR and CD8 coreceptor on the surface of T cells. HLA-A (via polymorphic alpha-1 and alpha-2 domains) interacts with antigen-specific TCR (via CDR3 domains). One HLA-A molecule (mainly via nonpolymorphic alpha-3 domain) interacts with one CD8A homodimer (via CDR-like loop); this interaction ensures peptide-HLA-A-B2M recognition by CD8-positive T cells only. Alleles A*23:01; A*24:02 and A*32:01 interact (via Bw4 motif) with KIR3DL1 on NK cells; this interaction is direct. (Microbial infection) Interacts with HHV-8 MIR1 protein. In terms of assembly, (Microbial infection) Interacts with HTLV-1 accessory protein p12I. In terms of processing, (Microbial infection) Polyubiquitinated in a post ER compartment by interaction with human herpesvirus 8 MIR1 protein. This targets the protein for rapid degradation via the ubiquitin system. Post-translationally, N-linked glycosylation at Asn-110. As to expression, ubiquitous.

The protein resides in the cell membrane. It is found in the endoplasmic reticulum membrane. Functionally, antigen-presenting major histocompatibility complex class I (MHCI) molecule. In complex with B2M/beta 2 microglobulin displays primarily viral and tumor-derived peptides on antigen-presenting cells for recognition by alpha-beta T cell receptor (TCR) on HLA-A-restricted CD8-positive T cells, guiding antigen-specific T cell immune response to eliminate infected or transformed cells. May also present self-peptides derived from the signal sequence of secreted or membrane proteins, although T cells specific for these peptides are usually inactivated to prevent autoreactivity. Both the peptide and the MHC molecule are recognized by TCR, the peptide is responsible for the fine specificity of antigen recognition and MHC residues account for the MHC restriction of T cells. Typically presents intracellular peptide antigens of 8 to 13 amino acids that arise from cytosolic proteolysis via IFNG-induced immunoproteasome or via endopeptidase IDE/insulin-degrading enzyme. Can bind different peptides containing allele-specific binding motifs, which are mainly defined by anchor residues at position 2 and 9. Allele A*01:01: Presents a restricted peptide repertoire including viral epitopes derived from IAV NP/nucleoprotein (CTELKLSDY), IAV PB1/polymerase basic protein 1 (VSDGGPNLY), HAdV-11 capsid L3/hexon protein (LTDLGQNLLY), SARS-CoV-2 3a/ORF3a (FTSDYYQLY) as well as tumor peptide antigens including MAGE1 (EADPTGHSY), MAGEA3 (EVDPIGHLY) and WT1 (TSEKRPFMCAY), all having in common a canonical motif with a negatively charged Asp or Glu residue at position 3 and a Tyr anchor residue at the C-terminus. A number of HLA-A*01:01-restricted peptides carry a post-translational modification with oxidation and N-terminal acetylation being the most frequent. Fails to present highly immunogenic peptides from the EBV latent antigens. Its function is as follows. Allele A*02:01: A major allele in human populations, presents immunodominant viral epitopes derived from IAV M/matrix protein 1 (GILGFVFTL), HIV-1 env (TLTSCNTSV), HIV-1 gag-pol (ILKEPVHGV), HTLV-1 Tax (LLFGYPVYV), HBV C/core antigen (FLPSDFFPS), HCMV UL83/pp65 (NLVPMVATV) as well as tumor peptide antigens including MAGEA4 (GVYDGREHTV), WT1 (RMFPNAPYL) and CTAG1A/NY-ESO-1 (SLLMWITQC), all having in common hydrophobic amino acids at position 2 and at the C-terminal anchors. In terms of biological role, allele A*03:01: Presents viral epitopes derived from IAV NP (ILRGSVAHK), HIV-1 nef (QVPLRPMTYK), HIV-1 gag-pol (AIFQSSMTK), SARS-CoV-2 N/nucleoprotein (KTFPPTEPK) as well as tumor peptide antigens including PMEL (LIYRRRLMK), NODAL (HAYIQSLLK), TRP-2 (RMYNMVPFF), all having in common hydrophobic amino acids at position 2 and Lys or Arg anchor residues at the C-terminus. May also display spliced peptides resulting from the ligation of two separate proteasomal cleavage products that are not contiguous in the parental protein. Functionally, allele A*11:01: Presents several immunodominant epitopes derived from HIV-1 gag-pol and HHV-4 EBNA4, containing the peptide motif with Val, Ile, Thr, Leu, Tyr or Phe at position 2 and Lys anchor residue at the C-terminus. Important in the control of HIV-1, EBV and HBV infections. Presents an immunodominant epitope derived from SARS-CoV-2 N/nucleoprotein (KTFPPTEPK). Allele A*23:01: Interacts with natural killer (NK) cell receptor KIR3DL1 and may contribute to functional maturation of NK cells and self-nonself discrimination during innate immune response. Its function is as follows. Allele A*24:02: Presents viral epitopes derived from HIV-1 nef (RYPLTFGWCF), EBV lytic- and latent-cycle antigens BRLF1 (TYPVLEEMF), BMLF1 (DYNFVKQLF) and LMP2 (IYVLVMLVL), SARS-CoV nucleocapsid/N (QFKDNVILL), as well as tumor peptide antigens including PRAME (LYVDSLFFL), all sharing a common signature motif, namely an aromatic residue Tyr or Phe at position 2 and a nonhydrophobic anchor residue Phe, Leu or Iso at the C-terminus. Interacts with natural killer (NK) cell receptor KIR3DL1 and may contribute to functional maturation of NK cells and self-nonself discrimination during innate immune response. In terms of biological role, allele A*26:01: Presents several epitopes derived from HIV-1 gag-pol (EVIPMFSAL, ETKLGKAGY) and env (LVSDGGPNLY), carrying as anchor residues preferentially Glu at position 1, Val or Thr at position 2 and Tyr at the C-terminus. Functionally, allele A*29:02: Presents peptides having a common motif, namely a Glu residue at position 2 and Tyr or Leu anchor residues at the C-terminus. Allele A*32:01: Interacts with natural killer (NK) cell receptor KIR3DL1 and may contribute to functional maturation of NK cells and self-nonself discrimination during innate immune response. Its function is as follows. Allele A*68:01: Presents viral epitopes derived from IAV NP (KTGGPIYKR) and HIV-1 tat (ITKGLGISYGR), having a common signature motif namely, Val or Thr at position 2 and positively charged residues Arg or Lys at the C-terminal anchor. In terms of biological role, allele A*74:01: Presents immunodominant HIV-1 epitopes derived from gag-pol (GQMVHQAISPR, QIYPGIKVR) and rev (RQIHSISER), carrying an aliphatic residue at position 2 and Arg anchor residue at the C-terminus. May contribute to viral load control in chronic HIV-1 infection. The polypeptide is HLA class I histocompatibility antigen, A alpha chain (Homo sapiens (Human)).